A 114-amino-acid polypeptide reads, in one-letter code: Large ribosomal subunit protein bL17 (114 aa).

This sequence belongs to the bacterial ribosomal protein bL17 family. In terms of assembly, part of the 50S ribosomal subunit. Contacts protein L32.

The polypeptide is Large ribosomal subunit protein bL17 (Elusimicrobium minutum (strain Pei191)).